Here is a 271-residue protein sequence, read N- to C-terminus: Undecaprenyl-diphosphatase (271 aa).

Transmembrane regions (helical) follow at residues 5 to 25, 45 to 65, 86 to 106, 114 to 134, 149 to 169, 189 to 209, 226 to 246, and 251 to 271; these read YALF…FLPV, AATF…AVFW, TLSL…GLAI, LFGP…LIIA, ISYK…WPGF, AAEF…GLDL, VGFI…LALI, and FIPF…VFVA.

This sequence belongs to the UppP family.

It is found in the cell inner membrane. The catalysed reaction is di-trans,octa-cis-undecaprenyl diphosphate + H2O = di-trans,octa-cis-undecaprenyl phosphate + phosphate + H(+). In terms of biological role, catalyzes the dephosphorylation of undecaprenyl diphosphate (UPP). Confers resistance to bacitracin. This Aeromonas hydrophila subsp. hydrophila (strain ATCC 7966 / DSM 30187 / BCRC 13018 / CCUG 14551 / JCM 1027 / KCTC 2358 / NCIMB 9240 / NCTC 8049) protein is Undecaprenyl-diphosphatase.